A 443-amino-acid polypeptide reads, in one-letter code: Na(+)-translocating NADH-quinone reductase subunit A (443 aa).

It belongs to the NqrA family. As to quaternary structure, composed of six subunits; NqrA, NqrB, NqrC, NqrD, NqrE and NqrF.

The catalysed reaction is a ubiquinone + n Na(+)(in) + NADH + H(+) = a ubiquinol + n Na(+)(out) + NAD(+). In terms of biological role, NQR complex catalyzes the reduction of ubiquinone-1 to ubiquinol by two successive reactions, coupled with the transport of Na(+) ions from the cytoplasm to the periplasm. NqrA to NqrE are probably involved in the second step, the conversion of ubisemiquinone to ubiquinol. In Actinobacillus succinogenes (strain ATCC 55618 / DSM 22257 / CCUG 43843 / 130Z), this protein is Na(+)-translocating NADH-quinone reductase subunit A.